Here is a 244-residue protein sequence, read N- to C-terminus: Carboxy-S-adenosyl-L-methionine synthase (244 aa).

S-adenosyl-L-methionine-binding positions include tyrosine 41, 66–68 (GCS), 91–92 (DN), asparagine 134, and arginine 201.

This sequence belongs to the class I-like SAM-binding methyltransferase superfamily. Cx-SAM synthase family. As to quaternary structure, homodimer.

It carries out the reaction prephenate + S-adenosyl-L-methionine = carboxy-S-adenosyl-L-methionine + 3-phenylpyruvate + H2O. Its function is as follows. Catalyzes the conversion of S-adenosyl-L-methionine (SAM) to carboxy-S-adenosyl-L-methionine (Cx-SAM). This is Carboxy-S-adenosyl-L-methionine synthase from Colwellia psychrerythraea (strain 34H / ATCC BAA-681) (Vibrio psychroerythus).